The chain runs to 467 residues: 2-succinylbenzoate--CoA ligase (467 aa).

It belongs to the ATP-dependent AMP-binding enzyme family. MenE subfamily.

The catalysed reaction is 2-succinylbenzoate + ATP + CoA = 2-succinylbenzoyl-CoA + AMP + diphosphate. The protein operates within quinol/quinone metabolism; 1,4-dihydroxy-2-naphthoate biosynthesis; 1,4-dihydroxy-2-naphthoate from chorismate: step 5/7. It participates in quinol/quinone metabolism; menaquinone biosynthesis. Its function is as follows. Converts 2-succinylbenzoate (OSB) to 2-succinylbenzoyl-CoA (OSB-CoA). This Listeria innocua serovar 6a (strain ATCC BAA-680 / CLIP 11262) protein is 2-succinylbenzoate--CoA ligase.